Reading from the N-terminus, the 431-residue chain is Serine/threonine-protein kinase Sgk1 (431 aa).

The necessary for localization to the mitochondria stretch occupies residues 1–60 (MTVKTEAAKGTLTYSRMRGMVAILIAFMKQRRMGLNDFIQKIANNSYACKHPEVQSILKI). A disordered region spans residues 66–92 (PELMNANPSPPPSPSQQINLGPSSNPH). S74 carries the post-translational modification Phosphoserine. S78 is subject to Phosphoserine; by MAPK7. The span at 81-91 (QQINLGPSSNP) shows a compositional bias: polar residues. The Protein kinase domain maps to 98 to 355 (FHFLKVIGKG…FMEIKSHVFF (258 aa)). ATP-binding positions include 104 to 112 (IGKGSFGKV) and K127. Residues 131-141 (KKAILKKKEEK) carry the Nuclear localization signal motif. Residue D222 is the Proton acceptor of the active site. At T256 the chain carries Phosphothreonine; by PDPK1. Positions 356 to 431 (SLINWDDLIN…SYAPPTDSFL (76 aa)) constitute an AGC-kinase C-terminal domain. Position 369 is a phosphothreonine; by PKA (T369). Residues S397, S401, and S422 each carry the phosphoserine modification.

This sequence belongs to the protein kinase superfamily. AGC Ser/Thr protein kinase family. As to quaternary structure, homodimer; disulfide-linked. Forms a trimeric complex with FBXW7 and NOTCH1. Interacts with MAPK3/ERK1, MAPK1/ERK2, MAP2K1/MEK1, MAP2K2/MEK2, NEDD4, NEDD4L, MAPT/TAU, MAPK7, CREB1, SLC9A3R2/NHERF2 and KCNJ1/ROMK1. Associates with the mammalian target of rapamycin complex 2 (mTORC2) via an interaction with MAPKAP1/SIN1. Regulated by phosphorylation. Activated by phosphorylation on Ser-422 by mTORC2, transforming it into a substrate for PDPK1 which phosphorylates it on Thr-256. Phosphorylation on Ser-397 and Ser-401 are also essential for its activity. Phosphorylation on Ser-78 by MAPK7 is required for growth factor-induced cell cycle progression. In terms of processing, ubiquitinated by NEDD4L; which promotes proteasomal degradation. Ubiquitinated by SYVN1 at the endoplasmic reticulum; which promotes rapid proteasomal degradation and maintains a high turnover rate in resting cells. Isoform 2 shows enhanced stability. Expressed in most tissues with highest levels in the pancreas, followed by placenta, kidney and lung. Isoform 2 is strongly expressed in brain and pancreas, weaker in heart, placenta, lung, liver and skeletal muscle.

It is found in the cytoplasm. Its subcellular location is the nucleus. It localises to the endoplasmic reticulum membrane. The protein resides in the cell membrane. The protein localises to the mitochondrion. The catalysed reaction is L-seryl-[protein] + ATP = O-phospho-L-seryl-[protein] + ADP + H(+). It carries out the reaction L-threonyl-[protein] + ATP = O-phospho-L-threonyl-[protein] + ADP + H(+). With respect to regulation, two specific sites, one in the kinase domain (Thr-256) and the other in the C-terminal regulatory region (Ser-422), need to be phosphorylated for its full activation. Phosphorylation at Ser-397 and Ser-401 are also essential for its activity. Activated by WNK1, WNK2, WNK3 and WNK4; which promote phosphorylation by mTORC2. Functionally, serine/threonine-protein kinase which is involved in the regulation of a wide variety of ion channels, membrane transporters, cellular enzymes, transcription factors, neuronal excitability, cell growth, proliferation, survival, migration and apoptosis. Plays an important role in cellular stress response. Contributes to regulation of renal Na(+) retention, renal K(+) elimination, salt appetite, gastric acid secretion, intestinal Na(+)/H(+) exchange and nutrient transport, insulin-dependent salt sensitivity of blood pressure, salt sensitivity of peripheral glucose uptake, cardiac repolarization and memory consolidation. Up-regulates Na(+) channels: SCNN1A/ENAC, SCN5A and ASIC1/ACCN2, K(+) channels: KCNJ1/ROMK1, KCNA1-5, KCNQ1-5 and KCNE1, epithelial Ca(2+) channels: TRPV5 and TRPV6, chloride channels: BSND, CLCN2 and CFTR, glutamate transporters: SLC1A3/EAAT1, SLC1A2 /EAAT2, SLC1A1/EAAT3, SLC1A6/EAAT4 and SLC1A7/EAAT5, amino acid transporters: SLC1A5/ASCT2, SLC38A1/SN1 and SLC6A19, creatine transporter: SLC6A8, Na(+)/dicarboxylate cotransporter: SLC13A2/NADC1, Na(+)-dependent phosphate cotransporter: SLC34A2/NAPI-2B, glutamate receptor: GRIK2/GLUR6. Up-regulates carriers: SLC9A3/NHE3, SLC12A1/NKCC2, SLC12A3/NCC, SLC5A3/SMIT, SLC2A1/GLUT1, SLC5A1/SGLT1 and SLC15A2/PEPT2. Regulates enzymes: GSK3A/B, PMM2 and Na(+)/K(+) ATPase, and transcription factors: CTNNB1 and nuclear factor NF-kappa-B. Stimulates sodium transport into epithelial cells by enhancing the stability and expression of SCNN1A/ENAC. This is achieved by phosphorylating the NEDD4L ubiquitin E3 ligase, promoting its interaction with 14-3-3 proteins, thereby preventing it from binding to SCNN1A/ENAC and targeting it for degradation. Regulates store-operated Ca(+2) entry (SOCE) by stimulating ORAI1 and STIM1. Regulates KCNJ1/ROMK1 directly via its phosphorylation or indirectly via increased interaction with SLC9A3R2/NHERF2. Phosphorylates MDM2 and activates MDM2-dependent ubiquitination of p53/TP53. Phosphorylates MAPT/TAU and mediates microtubule depolymerization and neurite formation in hippocampal neurons. Phosphorylates SLC2A4/GLUT4 and up-regulates its activity. Phosphorylates APBB1/FE65 and promotes its localization to the nucleus. Phosphorylates MAPK1/ERK2 and activates it by enhancing its interaction with MAP2K1/MEK1 and MAP2K2/MEK2. Phosphorylates FBXW7 and plays an inhibitory role in the NOTCH1 signaling. Phosphorylates FOXO1 resulting in its relocalization from the nucleus to the cytoplasm. Phosphorylates FOXO3, promoting its exit from the nucleus and interference with FOXO3-dependent transcription. Phosphorylates BRAF and MAP3K3/MEKK3 and inhibits their activity. Phosphorylates SLC9A3/NHE3 in response to dexamethasone, resulting in its activation and increased localization at the cell membrane. Phosphorylates CREB1. Necessary for vascular remodeling during angiogenesis. Sustained high levels and activity may contribute to conditions such as hypertension and diabetic nephropathy. Isoform 2 exhibited a greater effect on cell plasma membrane expression of SCNN1A/ENAC and Na(+) transport than isoform 1. The sequence is that of Serine/threonine-protein kinase Sgk1 (SGK1) from Homo sapiens (Human).